A 173-amino-acid polypeptide reads, in one-letter code: Peptide deformylase (173 aa).

Positions 98 and 140 each coordinate Fe cation. Glutamate 141 is a catalytic residue. Histidine 144 contacts Fe cation.

This sequence belongs to the polypeptide deformylase family. Fe(2+) serves as cofactor.

The enzyme catalyses N-terminal N-formyl-L-methionyl-[peptide] + H2O = N-terminal L-methionyl-[peptide] + formate. In terms of biological role, removes the formyl group from the N-terminal Met of newly synthesized proteins. Requires at least a dipeptide for an efficient rate of reaction. N-terminal L-methionine is a prerequisite for activity but the enzyme has broad specificity at other positions. The polypeptide is Peptide deformylase (Caulobacter vibrioides (strain ATCC 19089 / CIP 103742 / CB 15) (Caulobacter crescentus)).